Here is a 74-residue protein sequence, read N- to C-terminus: Conotoxin MiEr93 (74 aa).

A signal peptide spans 1-22 (MKLTCVLIIAVLFLTAYQLATA). The propeptide occupies 23–45 (ASYAKGKQKHRALRPADKHLRLT). 3 disulfide bridges follow: Cys48–Cys62, Cys55–Cys66, and Cys61–Cys73.

The protein belongs to the conotoxin O1 superfamily. Expressed by the venom duct.

It is found in the secreted. In Conus miles (Soldier cone), this protein is Conotoxin MiEr93.